A 425-amino-acid polypeptide reads, in one-letter code: Serine hydroxymethyltransferase (425 aa).

(6S)-5,6,7,8-tetrahydrofolate-binding positions include leucine 128 and 132 to 134; that span reads GHL. The residue at position 237 (lysine 237) is an N6-(pyridoxal phosphate)lysine.

The protein belongs to the SHMT family. As to quaternary structure, homodimer. It depends on pyridoxal 5'-phosphate as a cofactor.

It is found in the cytoplasm. It carries out the reaction (6R)-5,10-methylene-5,6,7,8-tetrahydrofolate + glycine + H2O = (6S)-5,6,7,8-tetrahydrofolate + L-serine. The protein operates within one-carbon metabolism; tetrahydrofolate interconversion. It functions in the pathway amino-acid biosynthesis; glycine biosynthesis; glycine from L-serine: step 1/1. Catalyzes the reversible interconversion of serine and glycine with tetrahydrofolate (THF) serving as the one-carbon carrier. This reaction serves as the major source of one-carbon groups required for the biosynthesis of purines, thymidylate, methionine, and other important biomolecules. Also exhibits THF-independent aldolase activity toward beta-hydroxyamino acids, producing glycine and aldehydes, via a retro-aldol mechanism. The chain is Serine hydroxymethyltransferase from Wolbachia sp. subsp. Drosophila simulans (strain wRi).